The chain runs to 540 residues: Glucose-6-phosphate isomerase (540 aa).

The active-site Proton donor is glutamate 346. Active-site residues include histidine 377 and lysine 505.

The protein belongs to the GPI family.

The protein localises to the cytoplasm. It carries out the reaction alpha-D-glucose 6-phosphate = beta-D-fructose 6-phosphate. It functions in the pathway carbohydrate biosynthesis; gluconeogenesis. The protein operates within carbohydrate degradation; glycolysis; D-glyceraldehyde 3-phosphate and glycerone phosphate from D-glucose: step 2/4. Its function is as follows. Catalyzes the reversible isomerization of glucose-6-phosphate to fructose-6-phosphate. The sequence is that of Glucose-6-phosphate isomerase from Francisella philomiragia subsp. philomiragia (strain ATCC 25017 / CCUG 19701 / FSC 153 / O#319-036).